Consider the following 430-residue polypeptide: Serine--tRNA ligase (430 aa).

237–239 (TAE) contacts L-serine. 268-270 (RSE) lines the ATP pocket. Position 291 (Glu-291) interacts with L-serine. 355 to 358 (EISS) is an ATP binding site. Residue Ser-391 coordinates L-serine.

It belongs to the class-II aminoacyl-tRNA synthetase family. Type-1 seryl-tRNA synthetase subfamily. As to quaternary structure, homodimer. The tRNA molecule binds across the dimer.

The protein localises to the cytoplasm. It carries out the reaction tRNA(Ser) + L-serine + ATP = L-seryl-tRNA(Ser) + AMP + diphosphate + H(+). The catalysed reaction is tRNA(Sec) + L-serine + ATP = L-seryl-tRNA(Sec) + AMP + diphosphate + H(+). Its pathway is aminoacyl-tRNA biosynthesis; selenocysteinyl-tRNA(Sec) biosynthesis; L-seryl-tRNA(Sec) from L-serine and tRNA(Sec): step 1/1. Functionally, catalyzes the attachment of serine to tRNA(Ser). Is also able to aminoacylate tRNA(Sec) with serine, to form the misacylated tRNA L-seryl-tRNA(Sec), which will be further converted into selenocysteinyl-tRNA(Sec). The chain is Serine--tRNA ligase from Enterobacter sp. (strain 638).